Consider the following 138-residue polypeptide: F-box protein At4g12382 (138 aa).

The F-box domain occupies 7-53 (NPSFADLPSSLIEVIMSHLALKNNIRASAACKSWYEVGVSVRVVEKH).

The sequence is that of F-box protein At4g12382 from Arabidopsis thaliana (Mouse-ear cress).